A 226-amino-acid chain; its full sequence is Protein FMP52-1, mitochondrial (226 aa).

Residues 1 to 43 (MSAFVLGSTGLVGLQILKVLDSSTAFKKVSTVSRRLPSVTSGK) constitute a mitochondrion transit peptide.

The protein belongs to the FMP52 family.

It localises to the mitochondrion outer membrane. The polypeptide is Protein FMP52-1, mitochondrial (FMP521) (Scheffersomyces stipitis (strain ATCC 58785 / CBS 6054 / NBRC 10063 / NRRL Y-11545) (Yeast)).